The chain runs to 297 residues: Ribosomal protein L11 methyltransferase (297 aa).

Residues Thr152, Gly173, Asp195, and Asn234 each coordinate S-adenosyl-L-methionine.

The protein belongs to the methyltransferase superfamily. PrmA family.

The protein resides in the cytoplasm. It catalyses the reaction L-lysyl-[protein] + 3 S-adenosyl-L-methionine = N(6),N(6),N(6)-trimethyl-L-lysyl-[protein] + 3 S-adenosyl-L-homocysteine + 3 H(+). Its function is as follows. Methylates ribosomal protein L11. The polypeptide is Ribosomal protein L11 methyltransferase (Cupriavidus pinatubonensis (strain JMP 134 / LMG 1197) (Cupriavidus necator (strain JMP 134))).